The sequence spans 305 residues: Oxygen-dependent coproporphyrinogen-III oxidase (305 aa).

Ser92 serves as a coordination point for substrate. A divalent metal cation is bound by residues His96 and His106. The Proton donor role is filled by His106. 108-110 (NVR) contributes to the substrate binding site. A divalent metal cation contacts are provided by His145 and His175. Positions 239–274 (YVEFNLLFDRGTLFGLQSGGRAESILISLPPLVRWE) are important for dimerization. Substrate is bound at residue 257–259 (GGR).

It belongs to the aerobic coproporphyrinogen-III oxidase family. In terms of assembly, homodimer. The cofactor is a divalent metal cation.

It is found in the cytoplasm. It carries out the reaction coproporphyrinogen III + O2 + 2 H(+) = protoporphyrinogen IX + 2 CO2 + 2 H2O. It participates in porphyrin-containing compound metabolism; protoporphyrin-IX biosynthesis; protoporphyrinogen-IX from coproporphyrinogen-III (O2 route): step 1/1. Its function is as follows. Involved in the heme biosynthesis. Catalyzes the aerobic oxidative decarboxylation of propionate groups of rings A and B of coproporphyrinogen-III to yield the vinyl groups in protoporphyrinogen-IX. The protein is Oxygen-dependent coproporphyrinogen-III oxidase of Xylella fastidiosa (strain 9a5c).